Consider the following 872-residue polypeptide: Alanine--tRNA ligase (872 aa).

Positions 566, 570, 668, and 672 each coordinate Zn(2+).

The protein belongs to the class-II aminoacyl-tRNA synthetase family. Requires Zn(2+) as cofactor.

The protein localises to the cytoplasm. The enzyme catalyses tRNA(Ala) + L-alanine + ATP = L-alanyl-tRNA(Ala) + AMP + diphosphate. In terms of biological role, catalyzes the attachment of alanine to tRNA(Ala) in a two-step reaction: alanine is first activated by ATP to form Ala-AMP and then transferred to the acceptor end of tRNA(Ala). Also edits incorrectly charged Ser-tRNA(Ala) and Gly-tRNA(Ala) via its editing domain. In Lactococcus lactis subsp. cremoris (strain MG1363), this protein is Alanine--tRNA ligase.